Reading from the N-terminus, the 303-residue chain is Putative CRISPR-associated endonuclease Cas1 2 (303 aa).

Glu149 serves as a coordination point for Mn(2+).

Belongs to the CRISPR-associated endonuclease Cas1 family. Homodimer, forms a heterotetramer with a Cas2 homodimer. Mg(2+) is required as a cofactor. Mn(2+) serves as cofactor.

Its function is as follows. CRISPR (clustered regularly interspaced short palindromic repeat), is an adaptive immune system that provides protection against mobile genetic elements (viruses, transposable elements and conjugative plasmids). CRISPR clusters contain sequences complementary to antecedent mobile elements and target invading nucleic acids. CRISPR clusters are transcribed and processed into CRISPR RNA (crRNA). Acts as a dsDNA endonuclease. Involved in the integration of spacer DNA into the CRISPR cassette. The sequence is that of Putative CRISPR-associated endonuclease Cas1 2 from Methanospirillum hungatei JF-1 (strain ATCC 27890 / DSM 864 / NBRC 100397 / JF-1).